Reading from the N-terminus, the 161-residue chain is MATSKTIVLYLCQAPATASLYVSADTDADEPIIYFENITECLTDDQCDKFTYFAELKQEQALFMKKVYKHLVLKNEGAFNKHHVLFDAMIMYKTYVHLVDESAFGSNVINYCEQFITAIFEIFTLSSKIVVAVPVNWENDNLSVLLKHLHNLNLIGIEIVN.

This is P18 protein (P18) from Lepidoptera (butterflies and moths).